The primary structure comprises 337 residues: Transcription initiation factor IIB (337 aa).

The segment at 36–68 (SVQSVCPECGSRQLVHDYERAELVCQNCGLVLD) adopts a TFIIB-type zinc-finger fold. 4 residues coordinate Zn(2+): cysteine 41, cysteine 44, cysteine 60, and cysteine 63. Tandem repeats lie at residues 154–237 (SELD…SREL) and 248–329 (DYVP…ELAE).

Belongs to the TFIIB family.

Stabilizes TBP binding to an archaeal box-A promoter. Also responsible for recruiting RNA polymerase II to the pre-initiation complex (DNA-TBP-TFIIB). This chain is Transcription initiation factor IIB, found in Methanoculleus marisnigri (strain ATCC 35101 / DSM 1498 / JR1).